Reading from the N-terminus, the 950-residue chain is Leucine--tRNA ligase (950 aa).

A 'HIGH' region motif is present at residues 42–52; that stretch reads PYLNGNLHAGH. The 'KMSKS' region signature appears at 629–633; the sequence is KMSKS. Position 632 (K632) interacts with ATP. Residues 928-950 are disordered; the sequence is NPPYDPKGRAQNAEPGRPAIYIE.

The protein belongs to the class-I aminoacyl-tRNA synthetase family.

It localises to the cytoplasm. The enzyme catalyses tRNA(Leu) + L-leucine + ATP = L-leucyl-tRNA(Leu) + AMP + diphosphate. The sequence is that of Leucine--tRNA ligase from Methanothrix thermoacetophila (strain DSM 6194 / JCM 14653 / NBRC 101360 / PT) (Methanosaeta thermophila).